The primary structure comprises 490 residues: Betaine aldehyde dehydrogenase (490 aa).

The K(+) site is built by Thr26, Ile27, and Asp93. 150–152 (GAW) contributes to the NAD(+) binding site. Lys162 (charge relay system) is an active-site residue. 176–179 (KPSE) lines the NAD(+) pocket. A K(+)-binding site is contributed by Val180. NAD(+) is bound at residue 230 to 233 (GTST). K(+) is bound at residue Leu246. Glu252 acts as the Proton acceptor in catalysis. Residues Gly254, Cys286, and Glu387 each coordinate NAD(+). Catalysis depends on Cys286, which acts as the Nucleophile. Position 286 is a cysteine sulfenic acid (-SOH) (Cys286). K(+) is bound by residues Lys457 and Gly460. Glu464 serves as the catalytic Charge relay system.

It belongs to the aldehyde dehydrogenase family. In terms of assembly, dimer of dimers. K(+) serves as cofactor.

The catalysed reaction is betaine aldehyde + NAD(+) + H2O = glycine betaine + NADH + 2 H(+). The protein operates within amine and polyamine biosynthesis; betaine biosynthesis via choline pathway; betaine from betaine aldehyde: step 1/1. Involved in the biosynthesis of the osmoprotectant glycine betaine. Catalyzes the irreversible oxidation of betaine aldehyde to the corresponding acid. The protein is Betaine aldehyde dehydrogenase of Pseudomonas paraeruginosa (strain DSM 24068 / PA7) (Pseudomonas aeruginosa (strain PA7)).